Consider the following 385-residue polypeptide: T-box transcription factor TBX10 (385 aa).

Residues 22 to 61 (TTSSGWEPRLGSPFPSGPCTSSTGAQAVAEPTGQGPKNPR) form a disordered region. Residues 69–252 (LEMKPLWEEF…SNPFAKGFRE (184 aa)) constitute a DNA-binding region (T-box).

Its subcellular location is the nucleus. In terms of biological role, probable transcriptional regulator involved in developmental processes. The chain is T-box transcription factor TBX10 (TBX10) from Homo sapiens (Human).